We begin with the raw amino-acid sequence, 1132 residues long: BTB/POZ domain-containing protein 7 (1132 aa).

Over residues 1–10 the composition is skewed to polar residues; it reads MGANASNYPH. The tract at residues 1–24 is disordered; it reads MGANASNYPHSCSPRVGGNSQAQQ. The N-myristoyl glycine moiety is linked to residue Gly2. BTB domains lie at 142–211 and 247–341; these read TDVD…GMED and YDVV…DLSV. The region spanning 413 to 479 is the BACK domain; that stretch reads YGSKWVHRQA…WGEHQLMKRI (67 aa). A Phosphoserine modification is found at Ser722. 2 disordered regions span residues 897 to 1019 and 1035 to 1132; these read LSQS…HLHR and QRSD…KSAL. The segment covering 918–927 has biased composition (basic residues); it reads RHTHTSRKKH. 4 stretches are compositionally biased toward basic and acidic residues: residues 928–939, 1000–1019, 1083–1093, and 1105–1114; these read TLEQKTDTRENP, KKQE…HLHR, PEERSGRRLAD, and TDLEREDSIS. At Ser1012 the chain carries Phosphoserine.

The protein localises to the nucleus. Functionally, acts as a mediator of epithelial dynamics and organ branching by promoting cleft progression. Induced following accumulation of fibronectin in forming clefts, leading to local expression of the cell-scattering SNAIL2 and suppression of E-cadherin levels, thereby altering cell morphology and reducing cell-cell adhesion. This stimulates cell separation at the base of forming clefts by local, dynamic intercellular gap formation and promotes cleft progression. The polypeptide is BTB/POZ domain-containing protein 7 (BTBD7) (Homo sapiens (Human)).